A 438-amino-acid polypeptide reads, in one-letter code: Trigger factor (438 aa).

The 86-residue stretch at 162–247 (GDRVNINYQG…LNKVEAPKLP (86 aa)) folds into the PPIase FKBP-type domain.

The protein belongs to the FKBP-type PPIase family. Tig subfamily.

The protein localises to the cytoplasm. The enzyme catalyses [protein]-peptidylproline (omega=180) = [protein]-peptidylproline (omega=0). Its function is as follows. Involved in protein export. Acts as a chaperone by maintaining the newly synthesized protein in an open conformation. Functions as a peptidyl-prolyl cis-trans isomerase. The protein is Trigger factor of Nitrosomonas eutropha (strain DSM 101675 / C91 / Nm57).